Consider the following 206-residue polypeptide: Large ribosomal subunit protein uL4 (206 aa).

Positions 63–93 are disordered; the sequence is MYKQKGTGRARHHSARAPQFRGGGKAHGPVV. Residues 64 to 77 are compositionally biased toward basic residues; sequence YKQKGTGRARHHSA.

It belongs to the universal ribosomal protein uL4 family. In terms of assembly, part of the 50S ribosomal subunit.

Functionally, one of the primary rRNA binding proteins, this protein initially binds near the 5'-end of the 23S rRNA. It is important during the early stages of 50S assembly. It makes multiple contacts with different domains of the 23S rRNA in the assembled 50S subunit and ribosome. In terms of biological role, forms part of the polypeptide exit tunnel. This is Large ribosomal subunit protein uL4 from Sinorhizobium medicae (strain WSM419) (Ensifer medicae).